Here is a 91-residue protein sequence, read N- to C-terminus: Small ribosomal subunit protein uS19 (91 aa).

Belongs to the universal ribosomal protein uS19 family.

Functionally, protein S19 forms a complex with S13 that binds strongly to the 16S ribosomal RNA. The sequence is that of Small ribosomal subunit protein uS19 from Actinobacillus pleuropneumoniae serotype 7 (strain AP76).